Reading from the N-terminus, the 398-residue chain is Ethanolaminephosphotransferase 1 (398 aa).

Residue Ala-2 is modified to N-acetylalanine. The next 10 membrane-spanning stretches (helical) occupy residues 47–69 (WLAP…LLLT), 84–103 (HVPD…AYTL), 123–145 (LFDH…SIFG), 150–172 (GVSV…LSHW), 179–201 (VLFL…IVTA), 221–243 (LFTA…LNFF), 256–278 (VYEA…VWIL), 291–310 (IFYF…LIVC), 319–341 (TLNW…AATS), and 345–367 (SALL…VQVV). Sec-388 is a non-standard amino acid (selenocysteine).

It belongs to the CDP-alcohol phosphatidyltransferase class-I family. Requires Mg(2+) as cofactor. It depends on Mn(2+) as a cofactor.

It is found in the endoplasmic reticulum membrane. The catalysed reaction is CDP-ethanolamine + a 1,2-diacyl-sn-glycerol = a 1,2-diacyl-sn-glycero-3-phosphoethanolamine + CMP + H(+). It catalyses the reaction 1-O-alkyl-2-acyl-sn-glycerol + CDP-ethanolamine = a 1-O-alkyl-2-acyl-sn-glycero-3-phosphoethanolamine + CMP + H(+). It participates in phospholipid metabolism; phosphatidylethanolamine biosynthesis; phosphatidylethanolamine from ethanolamine: step 3/3. Ethanolaminephosphotransferase that catalyzes the transfer of phosphoethanolamine (PE) from CDP-ethanolamine to lipid acceptors, the final step in the synthesis of PE via the 'Kennedy' pathway. PE is the second most abundant phospholipid of membranes in mammals and is involved in various membrane-related cellular processes. The enzyme is critical for the synthesis of several PE species and also catalyzes the synthesis of plasmanyl-PE, a lipid required for proper myelination and neurodevelopment, from 1-alkyl-2-acylglycerol. The protein is Ethanolaminephosphotransferase 1 of Mus musculus (Mouse).